The chain runs to 817 residues: Probable inorganic carbon transporter subunit DabA (817 aa).

Residues cysteine 301, aspartate 303, histidine 491, and cysteine 506 each contribute to the Zn(2+) site. Disordered regions lie at residues 598–617 (NTSVDEGRPAAAVRETERRA) and 794–817 (GWHARPAPDASTATKAPASAGVPS).

It belongs to the inorganic carbon transporter (TC 9.A.2) DabA family. As to quaternary structure, forms a complex with DabB. Requires Zn(2+) as cofactor.

Its subcellular location is the cell inner membrane. Functionally, part of an energy-coupled inorganic carbon pump. The sequence is that of Probable inorganic carbon transporter subunit DabA from Salinibacter ruber (strain DSM 13855 / M31).